The following is a 296-amino-acid chain: Tubulin polyglutamylase complex subunit 2 (296 aa).

The disordered stretch occupies residues 257–296 (KILIPKKKGPVQPVSGQKGPGPLAPPTSKPSAGCGNPVRK).

As to quaternary structure, part of the neuronal tubulin polyglutamylase complex which contains TPGS1, TPGS2, TTLL1, LRRC49 and NICN1. Interacts with CSTPP1 and LRRC49.

The protein resides in the cytoplasm. The protein localises to the cytoskeleton. It is found in the microtubule organizing center. Its subcellular location is the centrosome. It localises to the centriolar satellite. In terms of biological role, subunit of the tubulin polyglutamylase complex (TPGC). The complex mediates cilia and flagella polyglutamylation which is essential for their biogenesis and motility. This is Tubulin polyglutamylase complex subunit 2 (Tpgs2) from Rattus norvegicus (Rat).